Here is a 374-residue protein sequence, read N- to C-terminus: Proton-coupled zinc antiporter SLC30A8 (374 aa).

Topologically, residues 1–67 (MKGSEEAYLV…QREQTFAKKK (67 aa)) are cytoplasmic. The tract at residues 18 to 48 (YSLTKDSEKNHPSKPPLQDEENPQSKYHCHN) is disordered. H45, C46, and H47 together coordinate Zn(2+). Residues 45 to 47 (HCH) carry the HCH Motif; seals regulatory zinc-binding pocket motif. A helical transmembrane segment spans residues 68 to 88 (LCIASLICFVFISAEIVGGYI). Topologically, residues 89-91 (AGS) are lumenal, vesicle. A helical transmembrane segment spans residues 92–112 (LAVVTDAAHLLVDLSSFFISL). Zn(2+) contacts are provided by H100, D104, and H131. Residues 113–134 (CSLWLSSKSSTTRLTFGWHRAE) are Cytoplasmic-facing. Residues 135–155 (ILGALMSVITIWLVTGVLVYL) traverse the membrane as a helical segment. Residues 156–169 (ACERLIRPDYTIDG) lie on the Lumenal, vesicle side of the membrane. A helical membrane pass occupies residues 170 to 190 (TVMLITSACALGANLVLALIL). At 191-222 (HQSGHGHSHAGGKHEHMASEYKPQTNASIRAA) the chain is on the cytoplasmic side. Residues 223–243 (FIHVIGDLFQSISVLISALII) traverse the membrane as a helical segment. Residues H225 and D229 each coordinate Zn(2+). Over 244–251 (YFKPEYKM) the chain is Lumenal, vesicle. Residues 252-272 (ADPICTFIFSIFVLITTVTVL) traverse the membrane as a helical segment. The Cytoplasmic segment spans residues 273 to 374 (RDLLTVLMEG…ECMFCYEPTQ (102 aa)). Residues H306, H323, H350, E357, C366, and C369 each coordinate Zn(2+).

Belongs to the cation diffusion facilitator (CDF) transporter (TC 2.A.4) family. SLC30A subfamily. As to quaternary structure, homodimer.

It localises to the cytoplasmic vesicle. It is found in the secretory vesicle membrane. Its subcellular location is the cell membrane. The enzyme catalyses Zn(2+)(in) + 2 H(+)(out) = Zn(2+)(out) + 2 H(+)(in). Its function is as follows. Proton-coupled zinc ion antiporter mediating the entry of zinc into the lumen of pancreatic beta cell secretory granules, thereby regulating insulin secretion. The chain is Proton-coupled zinc antiporter SLC30A8 (slc30a8) from Xenopus tropicalis (Western clawed frog).